Consider the following 342-residue polypeptide: Isopentenyl-diphosphate delta-isomerase (342 aa).

A substrate-binding site is contributed by 11 to 12 (RK). FMN-binding positions include Ser68, 69–71 (SMT), Ser99, and Asn127. A substrate-binding site is contributed by 99 to 101 (SMR). Residue Gln162 coordinates substrate. Position 163 (Glu163) interacts with Mg(2+). FMN contacts are provided by residues Lys194, Thr224, 274-276 (GLK), and 295-296 (AG).

Belongs to the IPP isomerase type 2 family. In terms of assembly, homooctamer. Dimer of tetramers. The cofactor is FMN. NADPH serves as cofactor. Requires Mg(2+) as cofactor.

It localises to the cytoplasm. The catalysed reaction is isopentenyl diphosphate = dimethylallyl diphosphate. Functionally, involved in the biosynthesis of isoprenoids. Catalyzes the 1,3-allylic rearrangement of the homoallylic substrate isopentenyl (IPP) to its allylic isomer, dimethylallyl diphosphate (DMAPP). This Rickettsia peacockii (strain Rustic) protein is Isopentenyl-diphosphate delta-isomerase.